Here is a 160-residue protein sequence, read N- to C-terminus: Twist-related protein 2 (160 aa).

The interval 1-63 (MEEGSSSPVS…GSPSAQSFEE (63 aa)) is disordered. A compositionally biased stretch (basic residues) spans 27–37 (KRFGRKRRYSK). Residues 66–117 (SQRILANVRERQRTQSLNEAFAALRKIIPTLPSDKLSKIQTLKLAARYIDFL) form the bHLH domain.

As to quaternary structure, efficient DNA binding requires dimerization with another bHLH protein. Forms a heterodimer with TCF3/E12. Also interacts with MEF2C. Expressed at low levels in sclerotome and dermatome of somites, and in limb buds at 10.5 dpc. Accumulates predominantly in dermatome, prevertebrae and derivatives of branchial arches by 13 dpc. Also expressed near surface of embryo and in chondrogenic cells. In adult, expressed at low levels in skin, bladder, uterus, aorta and heart.

The protein resides in the nucleus. It localises to the cytoplasm. In terms of biological role, binds to the E-box consensus sequence 5'-CANNTG-3' as a heterodimer and inhibits transcriptional activation by MYOD1, MYOG, MEF2A and MEF2C. Also represses expression of pro-inflammatory cytokines such as TNFA and IL1B. Involved in postnatal glycogen storage and energy metabolism. Inhibits the premature or ectopic differentiation of preosteoblast cells during osteogenesis, possibly by changing the internal signal transduction response of osteoblasts to external growth factors. This Mus musculus (Mouse) protein is Twist-related protein 2 (Twist2).